A 521-amino-acid chain; its full sequence is Cytoplasmic polyadenylation element-binding protein 2 (521 aa).

A compositionally biased stretch (pro residues) spans 1 to 11; that stretch reads MNLPQQQPPAA. Disordered regions lie at residues 1 to 35 and 50 to 88; these read MNLP…QAAA and PLLK…NMGI. Positions 12-35 are enriched in low complexity; the sequence is APQQPQSRRSPVSPQLQQQHQAAA. Residue Ser-21 is modified to Phosphoserine. A compositionally biased stretch (polar residues) spans 55-70; that stretch reads SPWSNHQNSGWGTASM. 2 RRM domains span residues 264–355 and 372–454; these read RKVF…PWNL and KTIF…PYVL.

It belongs to the RRM CPEB family. Interacts with TENT2/GLD2. Expressed in embryo, cerebellum, salivary gland, thymus, heart, liver, lung, spleen, kidney, intestine, ovary and round spermatids. Weakly expressed in granular cells of dentate gyrus and the pyramidal cells of CA3 and CA1 of the hippocampus.

It is found in the cytoplasm. Its function is as follows. May play a role in translational regulation of stored mRNAs in transcriptionally inactive haploid spermatids. Binds to poly(U) RNA oligomers. Required for cell cycle progression, specifically for the transition from metaphase to anaphase. This is Cytoplasmic polyadenylation element-binding protein 2 (Cpeb2) from Mus musculus (Mouse).